An 854-amino-acid polypeptide reads, in one-letter code: Protein asteroid (854 aa).

Residues 368–427 (SEEECSDDEHSSSSDEKFSDVEEGEDQEEADNQDEEQQEENQDVDSGDEEEEEADEGLEL) form a disordered region. A compositionally biased stretch (basic and acidic residues) spans 375–387 (DEHSSSSDEKFSD). The span at 388–427 (VEEGEDQEEADNQDEEQQEENQDVDSGDEEEEEADEGLEL) shows a compositional bias: acidic residues.

This sequence belongs to the asteroid family. Expressed in the proliferative tissues of embryos and in the mitotically active tissue anterior to the morphogenetic furrow in eye imaginal disks.

Its function is as follows. May function in EGF receptor signaling. May play a role in compound eye morphogenesis. The protein is Protein asteroid (ast) of Drosophila melanogaster (Fruit fly).